The primary structure comprises 744 residues: 6-phosphofructo-2-kinase/fructose-2,6-bisphosphatase (744 aa).

2 disordered regions span residues 1–23 and 213–245; these read MGSGASKNTEEDDDGSNGGGGQL and RSLSASGSFRNDSTPKAAQRNSEDSGVTVDGSP. Residue Gly-2 is the site of N-myristoyl glycine attachment. The CBM20 domain occupies 17 to 122; it reads NGGGGQLYVS…GDARLALFRL (106 aa). Polar residues predominate over residues 213 to 232; it reads RSLSASGSFRNDSTPKAAQR. The residue at position 220 (Ser-220) is a Phosphoserine; by CPK3. A phosphoserine mark is found at Ser-276 and Ser-295. The segment at 301-549 is 6-phosphofructo-2-kinase; it reads SLSASSFLID…VFFLVNTHLT (249 aa). Ser-303 is modified (phosphoserine; by CPK3). Position 349–357 (349–357) interacts with ATP; the sequence is GLPARGKTF. Residues Arg-382 and Arg-406 each coordinate beta-D-fructose 6-phosphate. Asp-431 is an active-site residue. Thr-433 and Arg-439 together coordinate beta-D-fructose 6-phosphate. Cys-460 is an active-site residue. 469-474 contributes to the ATP binding site; sequence NIRLKI. Beta-D-fructose 6-phosphate contacts are provided by Arg-496 and Tyr-500. The interval 550–744 is fructose-2,6-bisphosphatase; sequence PRPILLTRHG…VQEKRYKLMD (195 aa). A beta-D-fructose 2,6-bisphosphate-binding site is contributed by Arg-557. Catalysis depends on His-558, which acts as the Tele-phosphohistidine intermediate. Beta-D-fructose 2,6-bisphosphate-binding residues include Asn-564 and Gly-570. Glu-630 (proton donor/acceptor) is an active-site residue. Positions 641, 655, 659, 670, 697, and 701 each coordinate beta-D-fructose 2,6-bisphosphate. Residue 652–655 coordinates ATP; sequence YESR. 697-701 lines the ATP pocket; the sequence is QAVLR.

It in the C-terminal section; belongs to the phosphoglycerate mutase family. Interacts with 14-3-3 proteins; these interactions may regulate both nitrate assimilation and sucrose/starch partitioning in leaves during the diurnal cycle. In terms of processing, phosphorylation at Ser-220 and Ser-303 by CPK3 promotes 14-3-3 proteins binding.

It localises to the membrane. The protein localises to the cytoplasm. The enzyme catalyses beta-D-fructose 2,6-bisphosphate + H2O = beta-D-fructose 6-phosphate + phosphate. The catalysed reaction is beta-D-fructose 6-phosphate + ATP = beta-D-fructose 2,6-bisphosphate + ADP + H(+). With respect to regulation, 6-phosphofructo-2-kinase activity is activated by pyruvate. 6-phosphofructo-2-kinase activity is inhibited by PPi, phosphoenolpyruvate and 2-phosphoglycerate. Fructose-2,6-bisphosphatase activity is inhibited by pyruvate, fructose 1,6-bisphosphate and 6-phosphogluconate. In terms of biological role, synthesis and degradation of fructose 2,6-bisphosphate. Regulates carbon partitioning between sucrose versus starch during the diurnal cycle. The protein is 6-phosphofructo-2-kinase/fructose-2,6-bisphosphatase (FKFBP) of Arabidopsis thaliana (Mouse-ear cress).